The primary structure comprises 257 residues: UPF0246 protein SO_3540 (257 aa).

This sequence belongs to the UPF0246 family.

The chain is UPF0246 protein SO_3540 from Shewanella oneidensis (strain ATCC 700550 / JCM 31522 / CIP 106686 / LMG 19005 / NCIMB 14063 / MR-1).